The chain runs to 167 residues: SsrA-binding protein (167 aa).

This sequence belongs to the SmpB family.

The protein localises to the cytoplasm. Its function is as follows. Required for rescue of stalled ribosomes mediated by trans-translation. Binds to transfer-messenger RNA (tmRNA), required for stable association of tmRNA with ribosomes. tmRNA and SmpB together mimic tRNA shape, replacing the anticodon stem-loop with SmpB. tmRNA is encoded by the ssrA gene; the 2 termini fold to resemble tRNA(Ala) and it encodes a 'tag peptide', a short internal open reading frame. During trans-translation Ala-aminoacylated tmRNA acts like a tRNA, entering the A-site of stalled ribosomes, displacing the stalled mRNA. The ribosome then switches to translate the ORF on the tmRNA; the nascent peptide is terminated with the 'tag peptide' encoded by the tmRNA and targeted for degradation. The ribosome is freed to recommence translation, which seems to be the essential function of trans-translation. This chain is SsrA-binding protein, found in Stenotrophomonas maltophilia (strain K279a).